The following is a 229-amino-acid chain: tRNA (guanine-N(7)-)-methyltransferase (229 aa).

Residues Glu62, Glu87, Asp114, and Asp137 each coordinate S-adenosyl-L-methionine. Residue Asp137 is part of the active site. Substrate is bound at residue Lys141. The segment at 143-148 (KHNKRR) is interaction with RNA. Residues Asp173 and 208–211 (TKFE) each bind substrate.

This sequence belongs to the class I-like SAM-binding methyltransferase superfamily. TrmB family.

The catalysed reaction is guanosine(46) in tRNA + S-adenosyl-L-methionine = N(7)-methylguanosine(46) in tRNA + S-adenosyl-L-homocysteine. The protein operates within tRNA modification; N(7)-methylguanine-tRNA biosynthesis. Functionally, catalyzes the formation of N(7)-methylguanine at position 46 (m7G46) in tRNA. The polypeptide is tRNA (guanine-N(7)-)-methyltransferase (Francisella philomiragia subsp. philomiragia (strain ATCC 25017 / CCUG 19701 / FSC 153 / O#319-036)).